The primary structure comprises 269 residues: GATA zinc finger domain-containing protein 1 (269 aa).

Residues 9-33 (CSVCKTTSSSMWKKGAQGEILCHHC) form a GATA-type zinc finger. The interval 63–115 (ATFASTSATPPQSNGGGGGKQSKQEIHRRSARLRNTKYKSAPAAEKKVSTKGK) is disordered. Residue lysine 262 forms a Glycyl lysine isopeptide (Lys-Gly) (interchain with G-Cter in SUMO2) linkage.

As to quaternary structure, component of a chromatin complex, at least composed of KDM5A, GATAD1 and EMSY. In terms of tissue distribution, ubiquitously expressed among various tissue types. Expressed in left ventricular myocytes.

It localises to the nucleus. In terms of biological role, component of some chromatin complex recruited to chromatin sites methylated 'Lys-4' of histone H3 (H3K4me), with a preference for trimethylated form (H3K4me3). The sequence is that of GATA zinc finger domain-containing protein 1 (GATAD1) from Homo sapiens (Human).